Consider the following 428-residue polypeptide: Maltoporin (428 aa).

An N-terminal signal peptide occupies residues 1-24 (MKSMRILPISLTIMAGLLSIEASA).

Belongs to the porin LamB (TC 1.B.3) family. Homotrimer formed of three 18-stranded antiparallel beta-barrels, containing three independent channels.

The protein resides in the cell outer membrane. It carries out the reaction beta-maltose(in) = beta-maltose(out). Its function is as follows. Involved in the transport of maltose and maltodextrins. The chain is Maltoporin from Photorhabdus laumondii subsp. laumondii (strain DSM 15139 / CIP 105565 / TT01) (Photorhabdus luminescens subsp. laumondii).